The sequence spans 84 residues: Large ribosomal subunit protein bL27 (84 aa).

The interval 1-22 (MAHKKAGGSTRNGRDSESKRLG) is disordered.

It belongs to the bacterial ribosomal protein bL27 family.

The polypeptide is Large ribosomal subunit protein bL27 (Shewanella oneidensis (strain ATCC 700550 / JCM 31522 / CIP 106686 / LMG 19005 / NCIMB 14063 / MR-1)).